Reading from the N-terminus, the 327-residue chain is Eukaryotic translation initiation factor 3 subunit I (327 aa).

5 WD repeats span residues 8 to 49 (GHER…GSYD), 51 to 89 (HNGA…CIYT), 188 to 227 (VHRY…KLKQ), 229 to 268 (KSER…GHFE), and 285 to 324 (GHFG…LGFT).

This sequence belongs to the eIF-3 subunit I family. As to quaternary structure, component of the eukaryotic translation initiation factor 3 (eIF-3) complex.

Its subcellular location is the cytoplasm. In terms of biological role, component of the eukaryotic translation initiation factor 3 (eIF-3) complex, which is involved in protein synthesis of a specialized repertoire of mRNAs and, together with other initiation factors, stimulates binding of mRNA and methionyl-tRNAi to the 40S ribosome. The eIF-3 complex specifically targets and initiates translation of a subset of mRNAs involved in cell proliferation. This Caenorhabditis briggsae protein is Eukaryotic translation initiation factor 3 subunit I.